Reading from the N-terminus, the 190-residue chain is Probable nicotinate-nucleotide adenylyltransferase (190 aa).

It belongs to the NadD family.

The catalysed reaction is nicotinate beta-D-ribonucleotide + ATP + H(+) = deamido-NAD(+) + diphosphate. It participates in cofactor biosynthesis; NAD(+) biosynthesis; deamido-NAD(+) from nicotinate D-ribonucleotide: step 1/1. In terms of biological role, catalyzes the reversible adenylation of nicotinate mononucleotide (NaMN) to nicotinic acid adenine dinucleotide (NaAD). The protein is Probable nicotinate-nucleotide adenylyltransferase of Staphylococcus saprophyticus subsp. saprophyticus (strain ATCC 15305 / DSM 20229 / NCIMB 8711 / NCTC 7292 / S-41).